Consider the following 256-residue polypeptide: Thiazole synthase (256 aa).

Lys-95 acts as the Schiff-base intermediate with DXP in catalysis. 1-deoxy-D-xylulose 5-phosphate-binding positions include Gly-156, 183–184 (AG), and 205–206 (NT).

Belongs to the ThiG family. As to quaternary structure, homotetramer. Forms heterodimers with either ThiH or ThiS.

Its subcellular location is the cytoplasm. It catalyses the reaction [ThiS sulfur-carrier protein]-C-terminal-Gly-aminoethanethioate + 2-iminoacetate + 1-deoxy-D-xylulose 5-phosphate = [ThiS sulfur-carrier protein]-C-terminal Gly-Gly + 2-[(2R,5Z)-2-carboxy-4-methylthiazol-5(2H)-ylidene]ethyl phosphate + 2 H2O + H(+). It participates in cofactor biosynthesis; thiamine diphosphate biosynthesis. Catalyzes the rearrangement of 1-deoxy-D-xylulose 5-phosphate (DXP) to produce the thiazole phosphate moiety of thiamine. Sulfur is provided by the thiocarboxylate moiety of the carrier protein ThiS. In vitro, sulfur can be provided by H(2)S. This chain is Thiazole synthase, found in Gluconacetobacter diazotrophicus (strain ATCC 49037 / DSM 5601 / CCUG 37298 / CIP 103539 / LMG 7603 / PAl5).